A 181-amino-acid chain; its full sequence is Mannose-specific lectin (181 aa).

A signal peptide spans 1 to 30; it reads MGRTTSSPKAMMRIATVAAILTILASTCMA. The region spanning 31–140 is the Bulb-type lectin domain; that stretch reads RNVLTNGEGL…DIWSTGTYRR (110 aa). Alpha-D-mannopyranose is bound by residues glutamine 56, aspartate 58, asparagine 60, tyrosine 64, tryptophan 71, alanine 72, asparagine 74, glutamine 88, aspartate 90, asparagine 92, tyrosine 96, valine 103, tryptophan 104, asparagine 107, asparagine 114, glutamine 120, aspartate 122, asparagine 124, tyrosine 128, and tryptophan 133. Cysteine 59 and cysteine 83 are joined by a disulfide.

Homodimer.

The protein localises to the secreted. Its function is as follows. Mannose-specific lectin. Shows agglutinating activity towards rabbit erythrocytes. However, it does not show agglutinating activity towards human erythrocytes. Has insecticidal activity against the cotton leafworm S.littoralis and the peach potato aphid M.persicae. Also displays antiviral activity and therefore may contribute to defense against infections. The sequence is that of Mannose-specific lectin from Allium sativum (Garlic).